Reading from the N-terminus, the 99-residue chain is RNA-binding protein HI_1333 (99 aa).

Positions 2–98 constitute a CRM domain; the sequence is TTLSTKQKQF…SEEAKIQLPR (97 aa).

The protein is RNA-binding protein HI_1333 of Haemophilus influenzae (strain ATCC 51907 / DSM 11121 / KW20 / Rd).